We begin with the raw amino-acid sequence, 103 residues long: Pyrimidine/purine nucleoside phosphorylase (103 aa).

It belongs to the nucleoside phosphorylase PpnP family.

The catalysed reaction is a purine D-ribonucleoside + phosphate = a purine nucleobase + alpha-D-ribose 1-phosphate. The enzyme catalyses adenosine + phosphate = alpha-D-ribose 1-phosphate + adenine. It catalyses the reaction cytidine + phosphate = cytosine + alpha-D-ribose 1-phosphate. It carries out the reaction guanosine + phosphate = alpha-D-ribose 1-phosphate + guanine. The catalysed reaction is inosine + phosphate = alpha-D-ribose 1-phosphate + hypoxanthine. The enzyme catalyses thymidine + phosphate = 2-deoxy-alpha-D-ribose 1-phosphate + thymine. It catalyses the reaction uridine + phosphate = alpha-D-ribose 1-phosphate + uracil. It carries out the reaction xanthosine + phosphate = alpha-D-ribose 1-phosphate + xanthine. In terms of biological role, catalyzes the phosphorolysis of diverse nucleosides, yielding D-ribose 1-phosphate and the respective free bases. Can use uridine, adenosine, guanosine, cytidine, thymidine, inosine and xanthosine as substrates. Also catalyzes the reverse reactions. The protein is Pyrimidine/purine nucleoside phosphorylase of Shewanella baltica (strain OS223).